The primary structure comprises 184 residues: Protein MEH1 (184 aa).

The N-myristoyl glycine moiety is linked to residue Gly-2. S-palmitoyl cysteine attachment occurs at residues Cys-7 and Cys-8. A coiled-coil region spans residues 30 to 71 (QGNANDEYDAEQMRLKEHEHEQKLLAREQELRDIVANTNDKL). The segment at 89–147 (LQEALDKRQQEEGGDSREDERSAGDDNLSGHSVPSSGSAQATTHQTAPRTNTFTLLTSP) is disordered. Positions 92–112 (ALDKRQQEEGGDSREDERSAG) are enriched in basic and acidic residues. The span at 117-147 (SGHSVPSSGSAQATTHQTAPRTNTFTLLTSP) shows a compositional bias: polar residues. Phosphoserine occurs at positions 146 and 149.

Component of the GSE complex composed of GTR1, GTR2, SLM4, MEH1 and LTV1. Component of the EGO complex, at least composed of GTR2, SLM4 and MEH1.

The protein localises to the vacuole membrane. Functionally, component of the GSE complex, a GTPase complex required for intracellular sorting of GAP1 out of the endosome. Component of the EGO complex, a complex involved in the regulation of microautophagy. This chain is Protein MEH1 (MEH1), found in Saccharomyces cerevisiae (strain ATCC 204508 / S288c) (Baker's yeast).